A 219-amino-acid polypeptide reads, in one-letter code: Ion-translocating oxidoreductase complex subunit G (219 aa).

A helical transmembrane segment spans residues 25–45 (GLLLGLFSLVSALMLALASDA). Threonine 187 carries the post-translational modification FMN phosphoryl threonine.

The protein belongs to the RnfG family. As to quaternary structure, the complex is composed of six subunits: RnfA, RnfB, RnfC, RnfD, RnfE and RnfG. Requires FMN as cofactor.

It localises to the cellular chromatophore membrane. Part of a membrane-bound complex that couples electron transfer with translocation of ions across the membrane. This is Ion-translocating oxidoreductase complex subunit G from Cereibacter sphaeroides (strain ATCC 17023 / DSM 158 / JCM 6121 / CCUG 31486 / LMG 2827 / NBRC 12203 / NCIMB 8253 / ATH 2.4.1.) (Rhodobacter sphaeroides).